The sequence spans 397 residues: MLNLLYLILGIICGTITGLFPGIHPNNIVALSFLILPYFGLDNYIPFLIGLVITHYFINFIPSAFLGVPDDETAVSALPMHKLTLNGNGYEAIVLAGFGSYLGVVFSILISLFLMSILHFDVRAFYCSIKIFIPFILIAFILYQIFTAKSVWEVLVIFLSGIFGIAVLYCSEAFNITLTAIFTGMFGIPLLINNLKTYKIKSQMMAFPDFELKFLKSSFFASVAGFFRIFLPGISGAQLNYILSKILNERDLKNFIVSQGSIILSNEVFSLLAVIFIGVGRSGVARAIQLLNANININTAIFSILISSTIAIIILLNLSKYILLFIRKVNFKFLSLFFIIFCSLVVIIGSYNTYLIYHIIVYLTAIYIGLLAVKSNTNLSNMMNVLIFPTILYFLRG.

Transmembrane regions (helical) follow at residues 2–24, 44–66, 92–114, 124–143, 150–169, 173–195, 255–277, 297–319, 331–350, and 354–373; these read LNLLYLILGIICGTITGLFPGIH, YIPFLIGLVITHYFINFIPSAFL, AIVLAGFGSYLGVVFSILISLFL, AFYCSIKIFIPFILIAFILY, SVWEVLVIFLSGIFGIAVLY, AFNITLTAIFTGMFGIPLLINNL, FIVSQGSIILSNEVFSLLAVIFI, INTAIFSILISSTIAIIILLNLS, FKFLSLFFIIFCSLVVIIGS, and YLIYHIIVYLTAIYIGLLAV.

The protein resides in the cell membrane. This is an uncharacterized protein from Methanocaldococcus jannaschii (strain ATCC 43067 / DSM 2661 / JAL-1 / JCM 10045 / NBRC 100440) (Methanococcus jannaschii).